A 261-amino-acid polypeptide reads, in one-letter code: UPF0246 protein Vapar_1301 (261 aa).

This sequence belongs to the UPF0246 family.

The chain is UPF0246 protein Vapar_1301 from Variovorax paradoxus (strain S110).